Here is a 722-residue protein sequence, read N- to C-terminus: Threonine--tRNA ligase 1, cytoplasmic (722 aa).

Positions 1-10 (MSQEKASSPS) are enriched in polar residues. The segment at 1–48 (MSQEKASSPSGKMDGEKPVDASEEKRKEGGKKKSKDGGGDGGRAELNP) is disordered. Over residues 13–27 (MDGEKPVDASEEKRK) the composition is skewed to basic and acidic residues. The 65-residue stretch at 78-142 (DSKPIKVTLP…ETDCTLELLK (65 aa)) folds into the TGS domain. At lysine 242 the chain carries N6-acetyllysine. A Phosphothreonine modification is found at threonine 245. Position 297 is a phosphotyrosine (tyrosine 297). Phosphothreonine is present on threonine 452.

The protein belongs to the class-II aminoacyl-tRNA synthetase family. In terms of assembly, homodimer. Post-translationally, ISGylated.

It is found in the cytoplasm. It carries out the reaction tRNA(Thr) + L-threonine + ATP = L-threonyl-tRNA(Thr) + AMP + diphosphate + H(+). Functionally, catalyzes the attachment of threonine to tRNA(Thr) in a two-step reaction: threonine is first activated by ATP to form Thr-AMP and then transferred to the acceptor end of tRNA(Thr). Also edits incorrectly charged tRNA(Thr) via its editing domain, at the post-transfer stage. The protein is Threonine--tRNA ligase 1, cytoplasmic (Tars1) of Mus musculus (Mouse).